Reading from the N-terminus, the 361-residue chain is MATAASNPYSILSSTSLVHADSAGMQQGSPFRNPQKLLQSDYLQGVPSNGHPLGHHWVTSLSDGGPWSSTLATSPLDQQDVKPGREDLQLGAIIHHRSPHVAHHSPHTNHPNAWGASPAPNPSITSSGQPLNVYSQPGFTVSGMLEHGGLTPPPAAASAQSLHPVLREPPDHGELGSHHCQDHSDEETPTSDELEQFAKQFKQRRIKLGFTQADVGLALGTLYGNVFSQTTICRFEGLQLSFKNMCKLKPLLNKWLEEADSSTGSPTSIDKIAAQGRKRKKRTSIEVSVKGVLETHFLKCPKPAAQEISSLADSLQLEKEVVRVWFCNRRQKEKRMTPPGDQQPHEVYSHTVKTDTSCHDL.

Disordered stretches follow at residues 99 to 131 (PHVA…GQPL) and 144 to 192 (MLEH…PTSD). Residues 122–131 (PSITSSGQPL) are compositionally biased toward polar residues. The segment covering 165–183 (VLREPPDHGELGSHHCQDH) has biased composition (basic and acidic residues). The POU-specific domain occupies 186-260 (EETPTSDELE…LLNKWLEEAD (75 aa)). Residue Ser265 is modified to Phosphoserine. The homeobox DNA-binding region spans 278–337 (KRKKRTSIEVSVKGVLETHFLKCPKPAAQEISSLADSLQLEKEVVRVWFCNRRQKEKRMT).

This sequence belongs to the POU transcription factor family. Class-3 subfamily. As to quaternary structure, interacts with HNRNPU. As to expression, brain specific.

It localises to the nucleus. Functionally, probable transcription factor which exert its primary action widely during early neural development and in a very limited set of neurons in the mature brain. The protein is POU domain, class 3, transcription factor 4 (POU3F4) of Homo sapiens (Human).